Consider the following 180-residue polypeptide: Alpha-S2-casein-like A (180 aa).

The first 15 residues, 1 to 15, serve as a signal peptide directing secretion; that stretch reads MRFFVFTCLLAVALA. Residues Ser-23 and Ser-25 each carry the phosphoserine modification. The interval 46–66 is disordered; the sequence is PTNQETPSVSSSEESVEVQTE.

This sequence belongs to the alpha-casein family. As to expression, mammary gland specific. Secreted in milk.

The protein localises to the secreted. Functionally, important role in the capacity of milk to transport calcium phosphate. The protein is Alpha-S2-casein-like A (CSN1S2A) of Oryctolagus cuniculus (Rabbit).